The following is a 218-amino-acid chain: Probable nicotinate-nucleotide adenylyltransferase (218 aa).

Belongs to the NadD family.

The enzyme catalyses nicotinate beta-D-ribonucleotide + ATP + H(+) = deamido-NAD(+) + diphosphate. The protein operates within cofactor biosynthesis; NAD(+) biosynthesis; deamido-NAD(+) from nicotinate D-ribonucleotide: step 1/1. Catalyzes the reversible adenylation of nicotinate mononucleotide (NaMN) to nicotinic acid adenine dinucleotide (NaAD). This Corynebacterium glutamicum (strain ATCC 13032 / DSM 20300 / JCM 1318 / BCRC 11384 / CCUG 27702 / LMG 3730 / NBRC 12168 / NCIMB 10025 / NRRL B-2784 / 534) protein is Probable nicotinate-nucleotide adenylyltransferase.